Here is a 327-residue protein sequence, read N- to C-terminus: Cytochrome P450 2C42 (327 aa).

Cys-272 lines the heme pocket.

The protein belongs to the cytochrome P450 family. Heme is required as a cofactor.

It is found in the endoplasmic reticulum membrane. Its subcellular location is the microsome membrane. It carries out the reaction an organic molecule + reduced [NADPH--hemoprotein reductase] + O2 = an alcohol + oxidized [NADPH--hemoprotein reductase] + H2O + H(+). In terms of biological role, cytochromes P450 are a group of heme-thiolate monooxygenases. In liver microsomes, this enzyme is involved in an NADPH-dependent electron transport pathway. It oxidizes a variety of structurally unrelated compounds, including steroids, fatty acids, and xenobiotics. This chain is Cytochrome P450 2C42 (CYP2C42), found in Sus scrofa (Pig).